Reading from the N-terminus, the 50-residue chain is U3-ctenitoxin-Asp1a (50 aa).

Expressed by the venom gland.

The protein localises to the secreted. In terms of biological role, possible neurotoxin. This Ancylometes sp. (South American fishing spider) protein is U3-ctenitoxin-Asp1a.